Here is a 142-residue protein sequence, read N- to C-terminus: Large ribosomal subunit protein uL13 (142 aa).

The protein belongs to the universal ribosomal protein uL13 family. In terms of assembly, part of the 50S ribosomal subunit.

This protein is one of the early assembly proteins of the 50S ribosomal subunit, although it is not seen to bind rRNA by itself. It is important during the early stages of 50S assembly. In Baumannia cicadellinicola subsp. Homalodisca coagulata, this protein is Large ribosomal subunit protein uL13.